A 121-amino-acid polypeptide reads, in one-letter code: Met-lysine-1a (121 aa).

Positions 1–22 are cleaved as a signal peptide; sequence MKSFVFALALIVAFACISESKS. A propeptide spanning residues 23-69 is cleaved from the precursor; that stretch reads DHTGYEEEENLEDSELTDLVTAALLEELAEASEMDDLSYTEEAGGER. Met120 carries the methionine amide modification.

Expressed by the venom gland.

It localises to the secreted. Functionally, shows no antimicrobial activity against Gram-positive bacterium B.subtilis B-501 or Gram-negative bacterium E.coli DH5-alpha at concentrations up to 20 ug/ml. Shows no toxicity towards insect (S.carnaria) larvae. This chain is Met-lysine-1a, found in Lachesana tarabaevi (Spider).